Reading from the N-terminus, the 284-residue chain is Acetylglutamate kinase (284 aa).

Residues 64-65, Arg86, and Asn181 each bind substrate; that span reads GG.

The protein belongs to the acetylglutamate kinase family. ArgB subfamily.

Its subcellular location is the cytoplasm. It catalyses the reaction N-acetyl-L-glutamate + ATP = N-acetyl-L-glutamyl 5-phosphate + ADP. The protein operates within amino-acid biosynthesis; L-arginine biosynthesis; N(2)-acetyl-L-ornithine from L-glutamate: step 2/4. Catalyzes the ATP-dependent phosphorylation of N-acetyl-L-glutamate. This is Acetylglutamate kinase from Nitratiruptor sp. (strain SB155-2).